The chain runs to 456 residues: MSAPRETIAAVATAQGRGGVGIVRISGPLASVAAKAISGRELKPRFAHYGPFFSDNQQVLDEGLALYFPGPNSFTGEDVLELQGHGGPIVLDMLLKRCLELGCRLARPGEFSERAFLNDKLDLAQAEAIADLIEASSAQAARNALRSLQGAFSQRVHNLTEQLIGLRIYVEAAIDFPEEEIDFLADGHVLSMLDKVRNELSTVLREAGQGALLRDGMTVVIAGRPNAGKSSLLNALAGREAAIVTEIAGTTRDILREHIHIDGMPLHVVDTAGLRDTDDHVEKIGVERALKAIGEADRVLLVVDATAPEAADPFALWPEFLETRPDPAKVTLIRNKADLTGEPIALEVSDDGHVTISLSAKSAGEGLDLLRDHLKACMGYEQTSESSFSARRRHLEALRHASDALEHGRAQLTLAGAGELLAEDLRQAQQSLGEITGAFSSDDLLGRIFSSFCIGK.

Residues R24, E81, and K120 each coordinate (6S)-5-formyl-5,6,7,8-tetrahydrofolate. In terms of domain architecture, TrmE-type G spans 216–379 (GMTVVIAGRP…LRDHLKACMG (164 aa)). N226 is a K(+) binding site. Residues 226 to 231 (NAGKSS), 245 to 251 (TEIAGTT), 270 to 273 (DTAG), and 335 to 338 (NKAD) each bind GTP. Mg(2+) is bound at residue S230. Positions 245, 247, and 250 each coordinate K(+). T251 provides a ligand contact to Mg(2+). K456 serves as a coordination point for (6S)-5-formyl-5,6,7,8-tetrahydrofolate.

This sequence belongs to the TRAFAC class TrmE-Era-EngA-EngB-Septin-like GTPase superfamily. TrmE GTPase family. Homodimer. Heterotetramer of two MnmE and two MnmG subunits. K(+) serves as cofactor.

The protein resides in the cytoplasm. Its function is as follows. Exhibits a very high intrinsic GTPase hydrolysis rate. Involved in the addition of a carboxymethylaminomethyl (cmnm) group at the wobble position (U34) of certain tRNAs, forming tRNA-cmnm(5)s(2)U34. This chain is tRNA modification GTPase MnmE, found in Pseudomonas fluorescens (strain Pf0-1).